The following is a 327-amino-acid chain: GTPase Obg (327 aa).

The 159-residue stretch at 1–159 folds into the Obg domain; it reads MQFIDQANII…WEVQLELKLL (159 aa). Residues 160–327 form the OBG-type G domain; that stretch reads AEVGIIGLPN…PLLSEVWKRI (168 aa). ATP is bound by residues 166–173, 191–195, 213–216, 280–283, and 309–311; these read GLPNAGKS, FTTLI, DIPG, NKME, and SSS. Residues S173 and T193 each coordinate Mg(2+).

This sequence belongs to the TRAFAC class OBG-HflX-like GTPase superfamily. OBG GTPase family. As to quaternary structure, monomer. Requires Mg(2+) as cofactor.

The protein resides in the cytoplasm. In terms of biological role, an essential GTPase which binds GTP, GDP and possibly (p)ppGpp with moderate affinity, with high nucleotide exchange rates and a fairly low GTP hydrolysis rate. Plays a role in control of the cell cycle, stress response, ribosome biogenesis and in those bacteria that undergo differentiation, in morphogenesis control. This chain is GTPase Obg, found in Prochlorococcus marinus subsp. pastoris (strain CCMP1986 / NIES-2087 / MED4).